The following is a 142-amino-acid chain: Large ribosomal subunit protein uL11 (142 aa).

This sequence belongs to the universal ribosomal protein uL11 family. As to quaternary structure, part of the ribosomal stalk of the 50S ribosomal subunit. Interacts with L10 and the large rRNA to form the base of the stalk. L10 forms an elongated spine to which L12 dimers bind in a sequential fashion forming a multimeric L10(L12)X complex. In terms of processing, one or more lysine residues are methylated.

Its function is as follows. Forms part of the ribosomal stalk which helps the ribosome interact with GTP-bound translation factors. The polypeptide is Large ribosomal subunit protein uL11 (Mycobacterium ulcerans (strain Agy99)).